The following is a 109-amino-acid chain: U26-theraphotoxin-Cg1a (109 aa).

An N-terminal signal peptide occupies residues 1–18; sequence MNTIIPLLLLSLLITVYA. Residues 19–67 constitute a propeptide that is removed on maturation; the sequence is YALEDGNKEEIQDIAESEFEASNEMLQLAHLLEADRAETEEDRNSRQKR. Disulfide bonds link Cys-68-Cys-83, Cys-75-Cys-88, and Cys-82-Cys-103.

Belongs to the neurotoxin 14 (magi-1) family. 07 (Jztx-56) subfamily. Expressed by the venom gland.

The protein resides in the secreted. Its function is as follows. Probable ion channel inhibitor. This Chilobrachys guangxiensis (Chinese earth tiger tarantula) protein is U26-theraphotoxin-Cg1a.